Reading from the N-terminus, the 624-residue chain is LEAF RUST 10 DISEASE-RESISTANCE LOCUS RECEPTOR-LIKE PROTEIN KINASE-like 2.2 (624 aa).

The first 30 residues, 1–30, serve as a signal peptide directing secretion; sequence MDYLSSMGSQTARFCLILLFLFYYLPCALS. At 31 to 263 the chain is on the extracellular side; that stretch reads QDDLWGCGTP…IPNTRSILIT (233 aa). 6 N-linked (GlcNAc...) asparagine glycosylation sites follow: N45, N75, N85, N95, N150, and N164. Residues 264-284 form a helical membrane-spanning segment; sequence IGQVVGFHVFIIVVMIIAFLF. Residues 285–624 lie on the Cytoplasmic side of the membrane; the sequence is WRRKKVNDLR…EEDSSIYSEV (340 aa). The Protein kinase domain maps to 317 to 599; sequence KSFTEVVGRG…SLDPPPKPLL (283 aa). ATP-binding positions include 323 to 331 and K345; that span reads VGRGGFGTV. Residue D434 is the Proton acceptor of the active site. A disordered region spans residues 587 to 624; that stretch reads NLDSLDPPPKPLLHMPMQNNNAESSQPSEEDSSIYSEV. Polar residues predominate over residues 603–624; it reads MQNNNAESSQPSEEDSSIYSEV.

Belongs to the protein kinase superfamily. Ser/Thr protein kinase family.

The protein localises to the membrane. The catalysed reaction is L-seryl-[protein] + ATP = O-phospho-L-seryl-[protein] + ADP + H(+). It carries out the reaction L-threonyl-[protein] + ATP = O-phospho-L-threonyl-[protein] + ADP + H(+). The polypeptide is LEAF RUST 10 DISEASE-RESISTANCE LOCUS RECEPTOR-LIKE PROTEIN KINASE-like 2.2 (Arabidopsis thaliana (Mouse-ear cress)).